Reading from the N-terminus, the 324-residue chain is dITP/XTP pyrophosphatase (324 aa).

The segment at 1 to 126 (MTKSIFEYKD…SDNKSDFGDV (126 aa)) is unknown. An NTP pyrophosphatase region spans residues 127-324 (LLIATRNEGK…EVFPAWQNKQ (198 aa)). Residue 131–136 (TRNEGK) participates in substrate binding. The active-site Proton acceptor is the Asp-193. Position 193 (Asp-193) interacts with Mg(2+). Substrate is bound by residues Ser-194, 277-280 (FGYD), Lys-300, and 305-306 (HR).

Belongs to the HAM1 NTPase family. In terms of assembly, homodimer. It depends on Mg(2+) as a cofactor.

It catalyses the reaction XTP + H2O = XMP + diphosphate + H(+). It carries out the reaction dITP + H2O = dIMP + diphosphate + H(+). The enzyme catalyses ITP + H2O = IMP + diphosphate + H(+). In terms of biological role, pyrophosphatase that catalyzes the hydrolysis of nucleoside triphosphates to their monophosphate derivatives, with a high preference for the non-canonical purine nucleotides XTP (xanthosine triphosphate), dITP (deoxyinosine triphosphate) and ITP. Seems to function as a house-cleaning enzyme that removes non-canonical purine nucleotides from the nucleotide pool, thus preventing their incorporation into DNA/RNA and avoiding chromosomal lesions. The protein is dITP/XTP pyrophosphatase of Streptococcus thermophilus (strain CNRZ 1066).